A 252-amino-acid chain; its full sequence is Carbohydrate deacetylase (252 aa).

Mg(2+) contacts are provided by H59 and H122.

It belongs to the YdjC deacetylase family. Homodimer. It depends on Mg(2+) as a cofactor.

In terms of biological role, probably catalyzes the deacetylation of acetylated carbohydrates an important step in the degradation of oligosaccharides. This Vibrio vulnificus (strain YJ016) protein is Carbohydrate deacetylase.